The primary structure comprises 155 residues: Pathogenesis-related protein STH-2 (155 aa).

The protein belongs to the BetVI family.

The protein is Pathogenesis-related protein STH-2 (STH-2) of Solanum tuberosum (Potato).